A 157-amino-acid polypeptide reads, in one-letter code: Protein Smg (157 aa).

This sequence belongs to the Smg family.

This chain is Protein Smg, found in Pectobacterium carotovorum subsp. carotovorum (strain PC1).